The chain runs to 100 residues: Aspartyl/glutamyl-tRNA(Asn/Gln) amidotransferase subunit C (100 aa).

Belongs to the GatC family. As to quaternary structure, heterotrimer of A, B and C subunits.

The catalysed reaction is L-glutamyl-tRNA(Gln) + L-glutamine + ATP + H2O = L-glutaminyl-tRNA(Gln) + L-glutamate + ADP + phosphate + H(+). It carries out the reaction L-aspartyl-tRNA(Asn) + L-glutamine + ATP + H2O = L-asparaginyl-tRNA(Asn) + L-glutamate + ADP + phosphate + 2 H(+). In terms of biological role, allows the formation of correctly charged Asn-tRNA(Asn) or Gln-tRNA(Gln) through the transamidation of misacylated Asp-tRNA(Asn) or Glu-tRNA(Gln) in organisms which lack either or both of asparaginyl-tRNA or glutaminyl-tRNA synthetases. The reaction takes place in the presence of glutamine and ATP through an activated phospho-Asp-tRNA(Asn) or phospho-Glu-tRNA(Gln). In Rickettsia bellii (strain RML369-C), this protein is Aspartyl/glutamyl-tRNA(Asn/Gln) amidotransferase subunit C.